The chain runs to 213 residues: ATP-dependent Clp protease proteolytic subunit 3 (213 aa).

The active-site Nucleophile is serine 107. Histidine 132 is a catalytic residue.

It belongs to the peptidase S14 family. In terms of assembly, fourteen ClpP subunits assemble into 2 heptameric rings which stack back to back to give a disk-like structure with a central cavity, resembling the structure of eukaryotic proteasomes.

It is found in the cytoplasm. It carries out the reaction Hydrolysis of proteins to small peptides in the presence of ATP and magnesium. alpha-casein is the usual test substrate. In the absence of ATP, only oligopeptides shorter than five residues are hydrolyzed (such as succinyl-Leu-Tyr-|-NHMec, and Leu-Tyr-Leu-|-Tyr-Trp, in which cleavage of the -Tyr-|-Leu- and -Tyr-|-Trp bonds also occurs).. Functionally, cleaves peptides in various proteins in a process that requires ATP hydrolysis. Has a chymotrypsin-like activity. Plays a major role in the degradation of misfolded proteins. The chain is ATP-dependent Clp protease proteolytic subunit 3 from Frankia casuarinae (strain DSM 45818 / CECT 9043 / HFP020203 / CcI3).